A 316-amino-acid chain; its full sequence is Vacuolar morphogenesis protein 7 (316 aa).

One can recognise a PX domain in the interval 1-124 (MAANSVGKMS…QDFLQLSKPN (124 aa)). Positions 168-186 (RARTKLHKLRERLEQDVQK) form a coiled coil. The region spanning 250-312 (MQMVRDQEQE…QIANKKARHF (63 aa)) is the t-SNARE coiled-coil homology domain.

In terms of assembly, possibly multimeric. Associates with VAM3.

Its subcellular location is the vacuole. Essential for proper morphogenesis of the vacuole. May exist as structural reinforcement on the surface of the vacuolar membrane and be required for maintenance against rupture by osmotic pressure. The protein is Vacuolar morphogenesis protein 7 (VAM7) of Saccharomyces cerevisiae (strain ATCC 204508 / S288c) (Baker's yeast).